Reading from the N-terminus, the 106-residue chain is UPF0145 protein PputW619_2377 (106 aa).

This sequence belongs to the UPF0145 family.

The protein is UPF0145 protein PputW619_2377 of Pseudomonas putida (strain W619).